The chain runs to 544 residues: Glucans biosynthesis protein G (544 aa).

The signal sequence occupies residues 1–34 (MVSLLRCQSSKPYSSLICSLALGVAFALSGTAYA).

Belongs to the OpgD/OpgG family.

It localises to the periplasm. The protein operates within glycan metabolism; osmoregulated periplasmic glucan (OPG) biosynthesis. Functionally, involved in the biosynthesis of osmoregulated periplasmic glucans (OPGs). The chain is Glucans biosynthesis protein G from Shewanella putrefaciens (strain CN-32 / ATCC BAA-453).